Consider the following 892-residue polypeptide: Translation initiation factor IF-2 (892 aa).

Positions 88–304 (KKRTFVKRDP…SSLQQGFQKP (217 aa)) are disordered. 2 stretches are compositionally biased toward basic and acidic residues: residues 93–159 (VKRD…KDKV) and 166–216 (DMTK…EENK). Over residues 254–269 (GRGRNAKAARPAKKGK) the composition is skewed to basic residues. The span at 270–282 (HAESKADREEARA) shows a compositional bias: basic and acidic residues. The tr-type G domain maps to 391–560 (PRAPVVTIMG…LLQAEVLELK (170 aa)). The G1 stretch occupies residues 400–407 (GHVDHGKT). GTP is bound at residue 400–407 (GHVDHGKT). The segment at 425-429 (GITQH) is G2. The G3 stretch occupies residues 446–449 (DTPG). GTP contacts are provided by residues 446 to 450 (DTPGH) and 500 to 503 (NKID). A G4 region spans residues 500-503 (NKID). The G5 stretch occupies residues 536–538 (SAK).

This sequence belongs to the TRAFAC class translation factor GTPase superfamily. Classic translation factor GTPase family. IF-2 subfamily.

The protein resides in the cytoplasm. In terms of biological role, one of the essential components for the initiation of protein synthesis. Protects formylmethionyl-tRNA from spontaneous hydrolysis and promotes its binding to the 30S ribosomal subunits. Also involved in the hydrolysis of GTP during the formation of the 70S ribosomal complex. The chain is Translation initiation factor IF-2 from Salmonella choleraesuis (strain SC-B67).